The primary structure comprises 401 residues: Exodeoxyribonuclease 7 large subunit (401 aa).

This sequence belongs to the XseA family. As to quaternary structure, heterooligomer composed of large and small subunits.

It localises to the cytoplasm. The catalysed reaction is Exonucleolytic cleavage in either 5'- to 3'- or 3'- to 5'-direction to yield nucleoside 5'-phosphates.. In terms of biological role, bidirectionally degrades single-stranded DNA into large acid-insoluble oligonucleotides, which are then degraded further into small acid-soluble oligonucleotides. The polypeptide is Exodeoxyribonuclease 7 large subunit (Clostridium botulinum (strain Hall / ATCC 3502 / NCTC 13319 / Type A)).